Here is a 328-residue protein sequence, read N- to C-terminus: uncharacterized protein (328 aa).

Positions 37–179 (LTEKLLCHQG…AMTLLRCRKI (143 aa)) constitute an SIS domain. 52-57 (GIGKSG) is an ATP binding site. 2 CBS domains span residues 207-264 (PRTE…GGDI) and 273-328 (MTRN…AGLL).

This sequence belongs to the SIS family. GutQ/KpsF subfamily.

This is an uncharacterized protein from Chlamydia trachomatis serovar D (strain ATCC VR-885 / DSM 19411 / UW-3/Cx).